A 596-amino-acid chain; its full sequence is MIELKTLLDLPLHFLHLKQIHCLLLTSPIFYTRRDLFLSRLLRRCCTAATQFRYARRLLCQLQTLSIQLWDSLIGHFSGGITLNRRLSFLAYRHMRRNGVIPSRHTFPPLLKAVFKLRDSNPFQFHAHIVKFGLDSDPFVRNSLISGYSSSGLFDFASRLFDGAEDKDVVTWTAMIDGFVRNGSASEAMVYFVEMKKTGVAANEMTVVSVLKAAGKVEDVRFGRSVHGLYLETGRVKCDVFIGSSLVDMYGKCSCYDDAQKVFDEMPSRNVVTWTALIAGYVQSRCFDKGMLVFEEMLKSDVAPNEKTLSSVLSACAHVGALHRGRRVHCYMIKNSIEINTTAGTTLIDLYVKCGCLEEAILVFERLHEKNVYTWTAMINGFAAHGYARDAFDLFYTMLSSHVSPNEVTFMAVLSACAHGGLVEEGRRLFLSMKGRFNMEPKADHYACMVDLFGRKGLLEEAKALIERMPMEPTNVVWGALFGSCLLHKDYELGKYAASRVIKLQPSHSGRYTLLANLYSESQNWDEVARVRKQMKDQQVVKSPGFSWIEVKGKLCEFIAFDDKKPLESDDLYKTLDTVGVQMRLPDELEDVTAES.

12 PPR repeats span residues Ser66 to Pro102, Ser103 to Ser136, Asp137 to Lys167, Asp168 to Ala202, Asn203 to Lys237, Asp239 to Arg269, Asn270 to Pro304, Asn305 to Ile339, Asn340 to Lys370, Asn371 to Pro405, Asn406 to Arg436, and Lys442 to Glu472. Residues Val477–Lys552 form a type E motif region. Residues Gly553 to Arg584 are type E(+) motif.

Belongs to the PPR family. PCMP-E subfamily.

This Arabidopsis thaliana (Mouse-ear cress) protein is Pentatricopeptide repeat-containing protein At1g50270 (PCMP-E42).